Consider the following 1349-residue polypeptide: Nitric oxide synthase (1349 aa).

Residues 23–195 (AQQQQQQQQQ…QPRKMSQDYR (173 aa)) form a disordered region. Composition is skewed to low complexity over residues 24–51 (QQQQ…TQQQ) and 64–73 (LNGNGLLSGN). Gly residues predominate over residues 142 to 159 (SGSGSGSGGGGVGVGQGA). The segment covering 165 to 189 (GSCTASGKSSRELSPSPKNQQQPRK) has biased composition (polar residues). Ser250 lines the (6R)-L-erythro-5,6,7,8-tetrahydrobiopterin pocket. Cys328 serves as a coordination point for heme b. 5 residues coordinate L-arginine: Gln391, Trp500, Tyr501, Glu505, and Asn510. Residues Trp591 and Phe604 each contribute to the (6R)-L-erythro-5,6,7,8-tetrahydrobiopterin site. A heme b-binding site is contributed by Tyr619. The interval 641 to 661 (PRRKFNFKQIARAVKFTSKLF) is calmodulin-binding. The Flavodoxin-like domain occupies 671-868 (ATVLYATETG…SFRKWAPEVF (198 aa)). Residue 814-845 (VFALGSSAYPNFCAFGQYVDNILGELGGERLL) participates in FMN binding. The FAD-binding FR-type domain occupies 928-1167 (AKAKPHNLTR…VRSALGFHLP (240 aa)). FAD contacts are provided by residues 957–968 (YEPGDHVGIFPA) and 1100–1110 (LQPRFYSISSS). NADP(+) is bound by residues 1175-1193 (ILIG…WQEF) and 1273-1287 (GHIY…AEHV).

Belongs to the NOS family. Heme b serves as cofactor. The cofactor is FAD. FMN is required as a cofactor.

The enzyme catalyses 2 L-arginine + 3 NADPH + 4 O2 + H(+) = 2 L-citrulline + 2 nitric oxide + 3 NADP(+) + 4 H2O. Stimulated by calcium/calmodulin. Catalyzes the conversion of L-arginine to L-citrulline producing nitric oxide (NO) which is a messenger molecule with diverse functions throughout the body. Truncated isoforms (isoform 3-isoform 6) are able to form intracellular complexes with the full-length protein and serve as dominant negative inhibitors of the enzyme activity. The chain is Nitric oxide synthase (Nos) from Drosophila melanogaster (Fruit fly).